Reading from the N-terminus, the 1073-residue chain is Receptor-type guanylate cyclase gcy-23 (1073 aa).

Residues 1–15 form the signal peptide; it reads MRRELFIFLLLLGEC. At 16 to 458 the chain is on the extracellular side; the sequence is ANVKVKVGHI…FRNEKCDYTT (443 aa). The N-linked (GlcNAc...) asparagine glycan is linked to Asn-336. A helical membrane pass occupies residues 459-479; the sequence is LIIGGCIVLLIILLIICFFIL. The Cytoplasmic segment spans residues 480–1073; it reads SRVCENRALA…QQQNFSQLGI (594 aa). Residues 508–808 enclose the Protein kinase domain; sequence MKSMLSIGSS…RVRLNTENYL (301 aa). Residues 813 to 844 are a coiled coil; that stretch reads SLVDQMMRMMEQYANNLEKLVAERTGMLEEAN. One can recognise a Guanylate cyclase domain in the interval 878–1008; the sequence is TVMFSDIVGF…DTVNVASRME (131 aa). Positions 883, 884, and 927 each coordinate Mg(2+).

This sequence belongs to the adenylyl cyclase class-4/guanylyl cyclase family. In terms of tissue distribution, expressed specifically in AFD sensory neurons.

Its subcellular location is the cell membrane. The protein resides in the cell projection. The protein localises to the cilium. It catalyses the reaction GTP = 3',5'-cyclic GMP + diphosphate. Guanylate cyclase involved in the production of the second messenger cGMP. Regulates thermotaxis responses in AFD sensory neurons. May regulate AFD neuronal activity such as calcium responses to temperature gradients. The protein is Receptor-type guanylate cyclase gcy-23 of Caenorhabditis elegans.